A 101-amino-acid chain; its full sequence is Small ribosomal subunit protein bS18c (101 aa).

It belongs to the bacterial ribosomal protein bS18 family. As to quaternary structure, part of the 30S ribosomal subunit.

The protein localises to the plastid. It is found in the chloroplast. This chain is Small ribosomal subunit protein bS18c, found in Coffea arabica (Arabian coffee).